We begin with the raw amino-acid sequence, 199 residues long: Peptidyl-tRNA hydrolase (199 aa).

Tyrosine 15 contributes to the tRNA binding site. The active-site Proton acceptor is the histidine 20. Positions 66, 68, and 114 each coordinate tRNA.

It belongs to the PTH family. In terms of assembly, monomer.

It localises to the cytoplasm. It carries out the reaction an N-acyl-L-alpha-aminoacyl-tRNA + H2O = an N-acyl-L-amino acid + a tRNA + H(+). In terms of biological role, hydrolyzes ribosome-free peptidyl-tRNAs (with 1 or more amino acids incorporated), which drop off the ribosome during protein synthesis, or as a result of ribosome stalling. Its function is as follows. Catalyzes the release of premature peptidyl moieties from peptidyl-tRNA molecules trapped in stalled 50S ribosomal subunits, and thus maintains levels of free tRNAs and 50S ribosomes. This chain is Peptidyl-tRNA hydrolase, found in Cupriavidus pinatubonensis (strain JMP 134 / LMG 1197) (Cupriavidus necator (strain JMP 134)).